The following is a 251-amino-acid chain: MYVLVLSMGDPVSRTFLDVTGPMPLLKTVGNVEVRKYRDMPVVIHRGDPVEFGAEEVLASLGKWAIFISRHEMANPKPFLTVHTPGAWPDVSVSNPRLVSSLYRALCKVAEEPFDCAIEATHHPPNTSAVSATFLEVGSTEAEWNSRRAVGLLQAALEEAVKGGVEATPTMVIGDLHYTTVGDLVLKGDIDVGHIVPKYVEITLDVVRRAYEKHTVPIRRAILFRKNVKNPTRSEVVEFLKAKGVDVVLKG.

This sequence belongs to the DtdA deacylase family. In terms of assembly, monomer. The cofactor is Zn(2+).

It carries out the reaction a D-aminoacyl-tRNA + H2O = a tRNA + a D-alpha-amino acid + H(+). The catalysed reaction is glycyl-tRNA(Ala) + H2O = tRNA(Ala) + glycine + H(+). D-aminoacyl-tRNA deacylase with broad substrate specificity. By recycling D-aminoacyl-tRNA to D-amino acids and free tRNA molecules, this enzyme counteracts the toxicity associated with the formation of D-aminoacyl-tRNA entities in vivo. The sequence is that of D-aminoacyl-tRNA deacylase from Pyrobaculum calidifontis (strain DSM 21063 / JCM 11548 / VA1).